The primary structure comprises 342 residues: Heat-inducible transcription repressor HrcA (342 aa).

Belongs to the HrcA family.

In terms of biological role, negative regulator of class I heat shock genes (grpE-dnaK-dnaJ and groELS operons). Prevents heat-shock induction of these operons. The chain is Heat-inducible transcription repressor HrcA from Shouchella clausii (strain KSM-K16) (Alkalihalobacillus clausii).